The sequence spans 223 residues: MNLIIGVAGRLLVGKNYCLNTQRLKHVLPDLPYDYGALEPILSAEIMQVHHGKHHAAYVNALNQAEEKVKEALAKGDTQAAVAGTKLMNFNTGGHINHTLFWEGLTAVKNSGEPNSELMTAIKKDFGSLETMIDKLNAKTIAIQGSGWGWLAYDKEMKRLQLACCPNQDLLEPTTGLIPLFCIDVWEHAYYLQYKNLRPDFVKAIWKIANWKIISDRYIKARG.

The N-terminal 24 residues, Met1–Leu24, are a transit peptide targeting the mitochondrion. His50, His98, Asp184, and His188 together coordinate Mn(2+).

The protein belongs to the iron/manganese superoxide dismutase family. In terms of assembly, homotetramer. Mn(2+) is required as a cofactor.

It localises to the mitochondrion matrix. It catalyses the reaction 2 superoxide + 2 H(+) = H2O2 + O2. Destroys superoxide anion radicals which are normally produced within the cells and which are toxic to biological systems. The chain is Superoxide dismutase [Mn], mitochondrial (sod-2) from Onchocerca volvulus.